Consider the following 140-residue polypeptide: Phosphoribosyl-AMP cyclohydrolase (140 aa).

Asp-84 contacts Mg(2+). Cys-85 contributes to the Zn(2+) binding site. The Mg(2+) site is built by Asp-86 and Asp-88. Residues Cys-101 and Cys-108 each contribute to the Zn(2+) site.

This sequence belongs to the PRA-CH family. In terms of assembly, homodimer. Mg(2+) is required as a cofactor. Requires Zn(2+) as cofactor.

The protein resides in the cytoplasm. It carries out the reaction 1-(5-phospho-beta-D-ribosyl)-5'-AMP + H2O = 1-(5-phospho-beta-D-ribosyl)-5-[(5-phospho-beta-D-ribosylamino)methylideneamino]imidazole-4-carboxamide. Its pathway is amino-acid biosynthesis; L-histidine biosynthesis; L-histidine from 5-phospho-alpha-D-ribose 1-diphosphate: step 3/9. Catalyzes the hydrolysis of the adenine ring of phosphoribosyl-AMP. The sequence is that of Phosphoribosyl-AMP cyclohydrolase from Chloroherpeton thalassium (strain ATCC 35110 / GB-78).